The primary structure comprises 302 residues: MKKNRLTHLKALEAESIQIMREVAAEFDNPVMLYSVGKDSSVLLHLARKAFYPGKIPFPLLHVDTNWKFKEMIAFRDNIAKKYDFDLLVHKNPRGMEMGISPFEHGSAKHTDIMKTEGLKQALDKYGFDAAFGGARRDEEKSRAKERVYSFRDKKHRWDPKNQRPELWNIYNAKVDRGESIRVFPLSNWTELDIWQYIYQEDIEMVPLYFAKKRPVVERDGALIMVDDERMPLKEGEVPEMKMVRFRTLGCYPLTGAIESQATTLPEIIQEMLLTTTSERQGRVIDNDSAGSMEKKKMEGYF.

Belongs to the PAPS reductase family. CysD subfamily. As to quaternary structure, heterodimer composed of CysD, the smaller subunit, and CysN.

The enzyme catalyses sulfate + ATP + H(+) = adenosine 5'-phosphosulfate + diphosphate. It participates in sulfur metabolism; hydrogen sulfide biosynthesis; sulfite from sulfate: step 1/3. With CysN forms the ATP sulfurylase (ATPS) that catalyzes the adenylation of sulfate producing adenosine 5'-phosphosulfate (APS) and diphosphate, the first enzymatic step in sulfur assimilation pathway. APS synthesis involves the formation of a high-energy phosphoric-sulfuric acid anhydride bond driven by GTP hydrolysis by CysN coupled to ATP hydrolysis by CysD. This Psychromonas ingrahamii (strain DSM 17664 / CCUG 51855 / 37) protein is Sulfate adenylyltransferase subunit 2.